A 514-amino-acid polypeptide reads, in one-letter code: MQQLNPAEISNLIKQRIQDLDAGATAKNEGTIVKVSDGIVQIHGLEDAMYGEMIEFEGEVYGMALNLERDSVGAVVLGDFLKLQEGQKAYCTGRILEVPVGPELLGRVVDALGNPIDGKGPINAKMTDKVEKIAPGVIDRQSVDQPVMTGYKSVDTMIPIGRGQRELIIGDRQTGKTAMAIDAIIAQKASGIKCVYVAIGQKRSTIANVVRKLEQTGALEYTTVVVASASEPAALQYIAPYSGCTMGEYFRDRGEDALIVFDDLSKQAVAYRQISLLLRRPPGREAYPGDVFYLHSRLLERASRVNAAYVEKFTNGEVVGKTGSLTALPIIETQAGDVSAFVPTNVISITDGQIFLESSLFNSGIRPAVNAGISVSRVGGAAQTKIIKKLSGGIRTALAQYRELAAFAQFASDLDDATREQLDHGERVTELMKQKQYQPMSISEQAAVIYASNEGFLADVPVEKIGSFEEAYLRYMHDEQADLMKEIDDTANYNDDIAGRLKLSLETFKQNHSY.

170 to 177 (GDRQTGKT) serves as a coordination point for ATP.

It belongs to the ATPase alpha/beta chains family. As to quaternary structure, F-type ATPases have 2 components, CF(1) - the catalytic core - and CF(0) - the membrane proton channel. CF(1) has five subunits: alpha(3), beta(3), gamma(1), delta(1), epsilon(1). CF(0) has three main subunits: a(1), b(2) and c(9-12). The alpha and beta chains form an alternating ring which encloses part of the gamma chain. CF(1) is attached to CF(0) by a central stalk formed by the gamma and epsilon chains, while a peripheral stalk is formed by the delta and b chains.

It localises to the cell inner membrane. The enzyme catalyses ATP + H2O + 4 H(+)(in) = ADP + phosphate + 5 H(+)(out). Produces ATP from ADP in the presence of a proton gradient across the membrane. The alpha chain is a regulatory subunit. This is ATP synthase subunit alpha from Psychrobacter arcticus (strain DSM 17307 / VKM B-2377 / 273-4).